The sequence spans 357 residues: MKWGFRWYGAAGDAIPLKHIRQIPGITGVVGTLLNKLPGDVWTVAEIQALKQSVEQEGLALLGIESVAIHDAIKAGTDQRDHYIDNYRQTLRNLGKCGISLVCYSFKPIFGWAKTDLAYENEDGSLSLLFDQAVVENMQPEDMYQLIHSQSKGFRLPGWEEERLQQFQELKAMYAGVTEEDLVENLRYFLERVIPVCEEENIKMGIHPDDPPWEIFGLPRITKNLADLKRILSLVDSPANGITFCTGSLGADPTNDLPTMIREIGHRINFVHFRNVKYLGEHRFEETAHPSVAGSLDMAELMQALVDVGYEGVIRPDHGRAIWDEKAMPGYGLYDRAMGLTYIQGLYEATKAKQNRK.

The protein belongs to the mannonate dehydratase family. Fe(2+) is required as a cofactor. The cofactor is Mn(2+).

It catalyses the reaction D-mannonate = 2-dehydro-3-deoxy-D-gluconate + H2O. It participates in carbohydrate metabolism; pentose and glucuronate interconversion. Catalyzes the dehydration of D-mannonate. This Enterococcus faecalis (strain ATCC 700802 / V583) protein is Mannonate dehydratase.